Consider the following 81-residue polypeptide: Neuronatin (81 aa).

It belongs to the neuronatin family.

In terms of biological role, may participate in the maintenance of segment identity in the hindbrain and pituitary development, and maturation or maintenance of the overall structure of the nervous system. May function as a regulatory subunit of ion channels. This is Neuronatin (NNAT) from Homo sapiens (Human).